We begin with the raw amino-acid sequence, 292 residues long: uncharacterized protein (292 aa).

Disordered regions lie at residues 29-50 (SEKP…LRDS) and 166-292 (VKRK…EELK). Ser50 is modified (phosphoserine). Composition is skewed to polar residues over residues 176-189 (NSKN…PVNN) and 208-217 (GSPTNFSKLI). Over residues 221–239 (YKDEWLQQQKADSDRRTPK) the composition is skewed to basic and acidic residues. Composition is skewed to polar residues over residues 240–250 (TSEASVSTQST) and 260–270 (DTETPQNSETP).

Phosphorylated upon DNA damage.

This is an uncharacterized protein from Rattus norvegicus (Rat).